We begin with the raw amino-acid sequence, 124 residues long: UPF0344 protein BH2983 (124 aa).

4 consecutive transmembrane segments (helical) span residues 15 to 35 (GSWAILIILFLVSYFLIKAGK), 40 to 60 (KILHMIVRLFFVIMLITGAGM), 61 to 81 (LVYWQFAFLFIVKGVLAIVLI), and 102 to 122 (IYWIVFITCLVLVALIGYNVI).

It belongs to the UPF0344 family.

The protein localises to the cell membrane. In Halalkalibacterium halodurans (strain ATCC BAA-125 / DSM 18197 / FERM 7344 / JCM 9153 / C-125) (Bacillus halodurans), this protein is UPF0344 protein BH2983.